Reading from the N-terminus, the 392-residue chain is ERBB-3 BINDING PROTEIN 1 (392 aa).

Necessary for nucleolar localization regions lie at residues 1–50 (MSSD…IVDI) and 298–392 (HLQP…NAQE). An RNA-binding region spans residues 48-56 (VDICEKGDS). The interaction with RNA stretch occupies residues 355–372 (GIKKKKGGGKKKKAQKAG). A Nuclear localization signal motif is present at residues 357 to 367 (KKKKGGGKKKK). The span at 358–369 (KKKGGGKKKKAQ) shows a compositional bias: basic residues. The segment at 358-392 (KKKGGGKKKKAQKAGEKGEASTEAEPMDASSNAQE) is disordered.

The protein belongs to the peptidase M24 family. Component of a ribonucleoprotein complex. Interacts with REIL1 and REIL2. Strongly expressed in calls, roots and flowers, to a lower extent, in stems and siliques, but hardly detectable in leaves.

It localises to the nucleus. Binds RNA. Associates with 28S, 18S and 5.8S mature rRNAs, several rRNA precursors and probably U3 small nucleolar RNA. May be involved in regulation of intermediate and late steps of rRNA processing. May be involved in ribosome assembly. Required for expression of cell cycle genes such as CYCD3-1, RNR2A and CDKB1-1. Promotes, in a dose- and auxin-dependent manner, organ growth by stimulating both cell proliferation and expansion, via the regulation of RBR1 levels. This is ERBB-3 BINDING PROTEIN 1 from Arabidopsis thaliana (Mouse-ear cress).